Here is a 442-residue protein sequence, read N- to C-terminus: Exodeoxyribonuclease 7 large subunit (442 aa).

Belongs to the XseA family. In terms of assembly, heterooligomer composed of large and small subunits.

It is found in the cytoplasm. The enzyme catalyses Exonucleolytic cleavage in either 5'- to 3'- or 3'- to 5'-direction to yield nucleoside 5'-phosphates.. In terms of biological role, bidirectionally degrades single-stranded DNA into large acid-insoluble oligonucleotides, which are then degraded further into small acid-soluble oligonucleotides. This chain is Exodeoxyribonuclease 7 large subunit, found in Shewanella loihica (strain ATCC BAA-1088 / PV-4).